Here is a 242-residue protein sequence, read N- to C-terminus: 2-C-methyl-D-erythritol 4-phosphate cytidylyltransferase (242 aa).

Belongs to the IspD/TarI cytidylyltransferase family. IspD subfamily.

It catalyses the reaction 2-C-methyl-D-erythritol 4-phosphate + CTP + H(+) = 4-CDP-2-C-methyl-D-erythritol + diphosphate. It functions in the pathway isoprenoid biosynthesis; isopentenyl diphosphate biosynthesis via DXP pathway; isopentenyl diphosphate from 1-deoxy-D-xylulose 5-phosphate: step 2/6. In terms of biological role, catalyzes the formation of 4-diphosphocytidyl-2-C-methyl-D-erythritol from CTP and 2-C-methyl-D-erythritol 4-phosphate (MEP). This is 2-C-methyl-D-erythritol 4-phosphate cytidylyltransferase from Vesicomyosocius okutanii subsp. Calyptogena okutanii (strain HA).